A 135-amino-acid chain; its full sequence is Histone H3 type 3 (135 aa).

The disordered stretch occupies residues 1–40; sequence MARTKQTARKSTGGKAPRKQLATKAARKTPATGGVKKPHR. K5 is modified (N6-methyllysine). K10 is subject to N6-acetyllysine; alternate. An N6-methyllysine; alternate modification is found at K10. Position 11 is a phosphoserine (S11). A Phosphothreonine modification is found at T12. K15, K19, and K24 each carry N6-acetyllysine. An N6-acetyllysine; alternate modification is found at K28. K28 is subject to N6-methyllysine; alternate. N6-methyllysine is present on residues K36 and K37.

The protein belongs to the histone H3 family. The nucleosome is a histone octamer containing two molecules each of H2A, H2B, H3 and H4 assembled in one H3-H4 heterotetramer and two H2A-H2B heterodimers. The octamer wraps approximately 147 bp of DNA. Post-translationally, acetylation is generally linked to gene activation. Acetylated to form H3K9ac (11%), H3K14ac (17%), H3K18ac (11%), H3K23ac (16%) and H3K27ac (7%). H3K4, H3K35 and H3K36 are not acetylated. H3K4me prevents acetylation. 32% of the histone H3 are acetylated with, on average, 2.4 acetyl-Lys. They are all continuously deacatylated and re-acetylated with a half-life of approximately 2 minutes. Monomethylated to form H3K4me1 (81%), H3K9me1 (16%), H3K27me1 (25%), H3K35me1 (25%) and H3K36me1 (5%). No methylation at H3K14, H3K18 and H3K23. Methylated by a protein complex that includes Mut11. Set1 methylates specifically H3K4. H3K4me1 is associated with silenced euchromatin. Set3 forms H3K9me1, while H3K9me2 is undetected. H3K9me1 is specifically associated with silent, multi-copy transgenes. In terms of processing, no phosphorylation detected.

Its subcellular location is the nucleus. It localises to the chromosome. Its function is as follows. Core component of nucleosome. Nucleosomes wrap and compact DNA into chromatin, limiting DNA accessibility to the cellular machineries which require DNA as a template. Histones thereby play a central role in transcription regulation, DNA repair, DNA replication and chromosomal stability. DNA accessibility is regulated via a complex set of post-translational modifications of histones, also called histone code, and nucleosome remodeling. The polypeptide is Histone H3 type 3 (ch3-IV) (Chlamydomonas reinhardtii (Chlamydomonas smithii)).